Here is a 272-residue protein sequence, read N- to C-terminus: MTTLACRKLAPHPESPRHQHAGPWLVWLHGLLGSRQDWLPVAQLCGDYPSLLIDLPGHGQSVSLSADGFADISRQLSQTLQANGIREYWLAGYSLGGRIAMYHACYGRHHGLQGLLVEGGNLGLENAELRQARLQQDRQWAQRFRQEPLPQVLDDWYQQAVFADLDPQQREQLVLLRADNHGPAVAEMLEATSLGHQPWLLPALQRLNVPYTYLCGDRDHKFLQLAQQYQLPLHTLARAGHNAHRANPGAFAAQVLAFLSQSSCLPPSSLSR.

Belongs to the AB hydrolase superfamily. MenH family. As to quaternary structure, monomer.

It carries out the reaction 5-enolpyruvoyl-6-hydroxy-2-succinyl-cyclohex-3-ene-1-carboxylate = (1R,6R)-6-hydroxy-2-succinyl-cyclohexa-2,4-diene-1-carboxylate + pyruvate. Its pathway is quinol/quinone metabolism; 1,4-dihydroxy-2-naphthoate biosynthesis; 1,4-dihydroxy-2-naphthoate from chorismate: step 3/7. It participates in quinol/quinone metabolism; menaquinone biosynthesis. Catalyzes a proton abstraction reaction that results in 2,5-elimination of pyruvate from 2-succinyl-5-enolpyruvyl-6-hydroxy-3-cyclohexene-1-carboxylate (SEPHCHC) and the formation of 2-succinyl-6-hydroxy-2,4-cyclohexadiene-1-carboxylate (SHCHC). The sequence is that of 2-succinyl-6-hydroxy-2,4-cyclohexadiene-1-carboxylate synthase from Yersinia pseudotuberculosis serotype O:1b (strain IP 31758).